Reading from the N-terminus, the 283-residue chain is 4-diphosphocytidyl-2-C-methyl-D-erythritol kinase (283 aa).

Residue K10 is part of the active site. Residue 99 to 109 participates in ATP binding; the sequence is PMGGGLGGGSS. D141 is a catalytic residue.

This sequence belongs to the GHMP kinase family. IspE subfamily. As to quaternary structure, homodimer.

It carries out the reaction 4-CDP-2-C-methyl-D-erythritol + ATP = 4-CDP-2-C-methyl-D-erythritol 2-phosphate + ADP + H(+). Its pathway is isoprenoid biosynthesis; isopentenyl diphosphate biosynthesis via DXP pathway; isopentenyl diphosphate from 1-deoxy-D-xylulose 5-phosphate: step 3/6. Catalyzes the phosphorylation of the position 2 hydroxy group of 4-diphosphocytidyl-2C-methyl-D-erythritol. This chain is 4-diphosphocytidyl-2-C-methyl-D-erythritol kinase, found in Salmonella arizonae (strain ATCC BAA-731 / CDC346-86 / RSK2980).